A 240-amino-acid chain; its full sequence is DNA repair protein RecO (240 aa).

It belongs to the RecO family.

In terms of biological role, involved in DNA repair and RecF pathway recombination. This Wolbachia pipientis wMel protein is DNA repair protein RecO.